A 254-amino-acid polypeptide reads, in one-letter code: tRNA (guanine-N(1)-)-methyltransferase (254 aa).

S-adenosyl-L-methionine is bound by residues Gly121 and 141–146 (LGDYVL).

It belongs to the RNA methyltransferase TrmD family. In terms of assembly, homodimer.

Its subcellular location is the cytoplasm. The enzyme catalyses guanosine(37) in tRNA + S-adenosyl-L-methionine = N(1)-methylguanosine(37) in tRNA + S-adenosyl-L-homocysteine + H(+). Functionally, specifically methylates guanosine-37 in various tRNAs. This is tRNA (guanine-N(1)-)-methyltransferase from Psychrobacter cryohalolentis (strain ATCC BAA-1226 / DSM 17306 / VKM B-2378 / K5).